Consider the following 593-residue polypeptide: Mitosis inducer protein kinase cdr1 (593 aa).

One can recognise a Protein kinase domain in the interval 12 to 258 (WRLGKTLGTG…IPEVFSHPFL (247 aa)). ATP is bound by residues 18 to 26 (LGTGSTSCV) and K41. The Proton acceptor role is filled by D128. Residue S550 is modified to Phosphoserine.

Belongs to the protein kinase superfamily. CAMK Ser/Thr protein kinase family. NIM1 subfamily. Interacts with msp1.

It catalyses the reaction L-seryl-[protein] + ATP = O-phospho-L-seryl-[protein] + ADP + H(+). The enzyme catalyses L-threonyl-[protein] + ATP = O-phospho-L-threonyl-[protein] + ADP + H(+). In terms of biological role, this protein, a dose-dependent mitotic inducer, appears to function as a negative regulator of mitosis inhibitor wee1 by phosphorylating and inactivating it. This chain is Mitosis inducer protein kinase cdr1 (cdr1), found in Schizosaccharomyces pombe (strain 972 / ATCC 24843) (Fission yeast).